Consider the following 336-residue polypeptide: tRNA N6-adenosine threonylcarbamoyltransferase (336 aa).

Fe cation-binding residues include His-114 and His-118. Residues 136-140 (LVSGG), Asp-169, Gly-182, Asp-186, and Asn-275 contribute to the substrate site. Asp-301 serves as a coordination point for Fe cation.

Belongs to the KAE1 / TsaD family. The cofactor is Fe(2+).

The protein localises to the cytoplasm. It carries out the reaction L-threonylcarbamoyladenylate + adenosine(37) in tRNA = N(6)-L-threonylcarbamoyladenosine(37) in tRNA + AMP + H(+). Functionally, required for the formation of a threonylcarbamoyl group on adenosine at position 37 (t(6)A37) in tRNAs that read codons beginning with adenine. Is involved in the transfer of the threonylcarbamoyl moiety of threonylcarbamoyl-AMP (TC-AMP) to the N6 group of A37, together with TsaE and TsaB. TsaD likely plays a direct catalytic role in this reaction. This is tRNA N6-adenosine threonylcarbamoyltransferase from Streptococcus sanguinis (strain SK36).